The chain runs to 151 residues: Macrodomain Ter protein (151 aa).

Belongs to the MatP family. As to quaternary structure, homodimer.

Its subcellular location is the cytoplasm. Functionally, required for spatial organization of the terminus region of the chromosome (Ter macrodomain) during the cell cycle. Prevents early segregation of duplicated Ter macrodomains during cell division. Binds specifically to matS, which is a 13 bp signature motif repeated within the Ter macrodomain. This is Macrodomain Ter protein from Escherichia fergusonii (strain ATCC 35469 / DSM 13698 / CCUG 18766 / IAM 14443 / JCM 21226 / LMG 7866 / NBRC 102419 / NCTC 12128 / CDC 0568-73).